Consider the following 277-residue polypeptide: Small ribosomal subunit protein uS2 (277 aa).

The interval 1–78 (MSENDEGTDA…PADEEPVLDE (78 aa)) is disordered.

It belongs to the universal ribosomal protein uS2 family.

This chain is Small ribosomal subunit protein uS2, found in Natronomonas pharaonis (strain ATCC 35678 / DSM 2160 / CIP 103997 / JCM 8858 / NBRC 14720 / NCIMB 2260 / Gabara) (Halobacterium pharaonis).